Here is a 68-residue protein sequence, read N- to C-terminus: Large ribosomal subunit protein bL31 (68 aa).

Zn(2+) is bound by residues Cys16, Cys18, Cys37, and Cys40.

This sequence belongs to the bacterial ribosomal protein bL31 family. Type A subfamily. Part of the 50S ribosomal subunit. Requires Zn(2+) as cofactor.

Its function is as follows. Binds the 23S rRNA. The polypeptide is Large ribosomal subunit protein bL31 (Aquifex aeolicus (strain VF5)).